Consider the following 446-residue polypeptide: D(1A) dopamine receptor (446 aa).

The Extracellular segment spans residues 1–23; it reads MRTLNTSTMEGTGLVAERDFSFR. A glycan (N-linked (GlcNAc...) asparagine) is linked at Asn5. A helical transmembrane segment spans residues 24–49; that stretch reads ILTACFLSLLILSTLLGNTLVCAAVI. Residues 50 to 60 are Cytoplasmic-facing; sequence RFRHLRSKVTN. A helical transmembrane segment spans residues 61–87; it reads FFVISLAVSDLLVAVLVMPWKAVAEIA. Residues 88–96 lie on the Extracellular side of the membrane; sequence GFWPFGSFC. Cys96 and Cys186 are oxidised to a cystine. Residues 97 to 119 form a helical membrane-spanning segment; that stretch reads NIWVAFDIMCSTASILNLCVISV. Residues 120–138 lie on the Cytoplasmic side of the membrane; it reads DRYWAISSPFRYERKMTPK. The helical transmembrane segment at 139 to 163 threads the bilayer; it reads AAFILISVAWTLSVLISFIPVQLSW. Residues 164 to 192 lie on the Extracellular side of the membrane; it reads HKAKPTGPSEGNATSLGKTINNCDSSLSR. N-linked (GlcNAc...) asparagine glycosylation occurs at Asn175. A helical transmembrane segment spans residues 193-218; the sequence is TYAISSSLISFYIPVAIMIVTYTRIY. The Cytoplasmic portion of the chain corresponds to 219-272; it reads RIAQKQIRRISALERAAVHAKNCQTTTGNGNPMECSQPESSFKMSFKRETKVLK. A helical transmembrane segment spans residues 273 to 299; sequence TLSVIMGVFVCCWLPFFILNCMVPFCG. At 300-312 the chain is on the extracellular side; the sequence is SGETKPFCIDSIT. The chain crosses the membrane as a helical span at residues 313 to 337; it reads FDVFVWFGWANSSLNPIIYAFNADF. Topologically, residues 338–446 are cytoplasmic; sequence RKAFSTLLGC…PITQNGQHPT (109 aa). S-palmitoyl cysteine attachment occurs at residues Cys347 and Cys351.

It belongs to the G-protein coupled receptor 1 family. As to quaternary structure, interacts with DNAJC14 via its C-terminus. Interacts with DRD2. Interacts with DORIP1.

It is found in the cell membrane. The protein resides in the endoplasmic reticulum membrane. It localises to the cell projection. The protein localises to the cilium membrane. Its subcellular location is the dendrite. It is found in the dendritic spine. Functionally, dopamine receptor whose activity is mediated by G proteins which activate adenylyl cyclase. This Bos taurus (Bovine) protein is D(1A) dopamine receptor (DRD1).